A 227-amino-acid chain; its full sequence is UPF0758 protein CPE2144 (227 aa).

In terms of domain architecture, MPN spans Lys-105–Leu-227. Zn(2+)-binding residues include His-176, His-178, and Asp-189. Residues His-176–Asp-189 carry the JAMM motif motif.

This sequence belongs to the UPF0758 family.

In Clostridium perfringens (strain 13 / Type A), this protein is UPF0758 protein CPE2144.